Consider the following 160-residue polypeptide: Nucleotide-binding protein ASA_3207 (160 aa).

Belongs to the YajQ family.

Nucleotide-binding protein. The sequence is that of Nucleotide-binding protein ASA_3207 from Aeromonas salmonicida (strain A449).